The primary structure comprises 1085 residues: Ubiquitin carboxyl-terminal hydrolase 36 (1085 aa).

Positions 23-36 are enriched in low complexity; sequence GGNSSAAGSSADQA. Disordered stretches follow at residues 23–47 and 104–149; these read GGNSSAAGSSADQAKSGEESNGSLQ and KVVG…PKPK. A USP domain is found at 173–481; that stretch reads TGMINVGNTC…NAYIMFYELD (309 aa). Cys-182 functions as the Nucleophile in the catalytic mechanism. His-440 functions as the Proton acceptor in the catalytic mechanism. Disordered regions lie at residues 489–730, 745–888, 963–1030, and 1043–1085; these read AANR…NNSK, KSAD…ELLK, EQRQ…FYNQ, and KFNR…QQQS. The span at 503-518 shows a compositional bias: low complexity; that stretch reads STTPVPATTVSSPSPT. Phosphoserine is present on residues Ser-514 and Ser-516. Residues 532–542 are compositionally biased toward polar residues; that stretch reads GYSNGNAQKTA. The span at 588–609 shows a compositional bias: low complexity; it reads NGNKSSSTSSNNSSSSNHKSIN. Basic and acidic residues predominate over residues 642–651; sequence MTDDHTEKPK. Thr-660 and Thr-664 each carry phosphothreonine. Ser-674 and Ser-676 each carry phosphoserine. Over residues 705 to 730 the composition is skewed to polar residues; sequence TNGHSKTNGSLTNGSASSSVHVNNSK. Ser-749 carries the post-translational modification Phosphoserine. The span at 749–758 shows a compositional bias: acidic residues; that stretch reads SDDDDDEEES. Positions 768–778 are enriched in low complexity; that stretch reads PQKQSQSQSKA. Residues 779-788 are compositionally biased toward pro residues; that stretch reads PPSPKTPPSP. Ser-781 is modified (phosphoserine). At Thr-784 the chain carries Phosphothreonine. Ser-787 bears the Phosphoserine mark. Acidic residues predominate over residues 805-818; it reads EVDDIDDDDDEEEE. Residues 822-844 are compositionally biased toward polar residues; it reads KIQTPSKTHRNPFSSSKPSTDSP. The residue at position 825 (Thr-825) is a Phosphothreonine. Position 843 is a phosphoserine (Ser-843). Thr-846 is modified (phosphothreonine). The segment covering 859–884 has biased composition (polar residues); sequence PVKSHQQPRVGNGYQSEATSNGSTIN. 2 stretches are compositionally biased toward low complexity: residues 987–998 and 1056–1066; these read SGSAKGNNASNS and QQQRALQRHLA.

Belongs to the peptidase C19 family. As to quaternary structure, interacts with atms/PAF1, but not with CycT.

Its subcellular location is the nucleus. It localises to the nucleolus. It carries out the reaction Thiol-dependent hydrolysis of ester, thioester, amide, peptide and isopeptide bonds formed by the C-terminal Gly of ubiquitin (a 76-residue protein attached to proteins as an intracellular targeting signal).. Its function is as follows. Required for maintaining multiple types of adult stem cells, including male and female germline, epithelial follicle cell and intestinal stem cells. May function as a transcriptional repressor by continually deubiquiting histone H2B at the promoters of genes critical for cellular differentiation, thereby preventing histone H3 'Lys-4' trimethylation (H3K4). Controls selective autophagy activation by ubiquitinated proteins. This Drosophila erecta (Fruit fly) protein is Ubiquitin carboxyl-terminal hydrolase 36 (Usp36).